A 420-amino-acid polypeptide reads, in one-letter code: Transcription termination factor Rho (420 aa).

In terms of domain architecture, Rho RNA-BD spans 49 to 124 (DIFGGGVLEI…LKVDQVNDDK (76 aa)). Residues 170–175 (GKGQRG), 182–187 (KAGKTM), and Arg213 each bind ATP.

Belongs to the Rho family. Homohexamer. The homohexamer assembles into an open ring structure.

Facilitates transcription termination by a mechanism that involves Rho binding to the nascent RNA, activation of Rho's RNA-dependent ATPase activity, and release of the mRNA from the DNA template. The sequence is that of Transcription termination factor Rho from Haemophilus influenzae (strain ATCC 51907 / DSM 11121 / KW20 / Rd).